A 370-amino-acid polypeptide reads, in one-letter code: Platelet-derived growth factor D (370 aa).

The first 18 residues, 1-18, serve as a signal peptide directing secretion; the sequence is MHRLIFVCTLVCANFCSC. Residues 52–170 form the CUB domain; that stretch reads RDETIQVRGN…PGFKIYYSLL (119 aa). The cysteines at positions 109 and 131 are disulfide-linked. Asn276 is a glycosylation site (N-linked (GlcNAc...) asparagine). 2 cysteine pairs are disulfide-bonded: Cys302-Cys360 and Cys306-Cys362.

This sequence belongs to the PDGF/VEGF growth factor family. As to quaternary structure, homodimer; disulfide-linked. Interacts with PDGFRB homodimers, and with heterodimers formed by PDGFRA and PDGFRB. Post-translationally, activated by proteolytic cleavage. Proteolytic removal of the N-terminal CUB domain releasing the core domain is necessary for unmasking the receptor-binding epitopes of the core domain. Cleavage after Arg-247 or Arg-249 by urokinase plasminogen activator gives rise to the active form.

It is found in the secreted. Its function is as follows. Growth factor that plays an essential role in the regulation of embryonic development, cell proliferation, cell migration, survival and chemotaxis. Potent mitogen for cells of mesenchymal origin. Plays an important role in wound healing. Induces macrophage recruitment, increased interstitial pressure, and blood vessel maturation during angiogenesis. Can initiate events that lead to a mesangial proliferative glomerulonephritis, including influx of monocytes and macrophages and production of extracellular matrix. This chain is Platelet-derived growth factor D (PDGFD), found in Pongo abelii (Sumatran orangutan).